A 150-amino-acid chain; its full sequence is Transcription antitermination protein NusB (150 aa).

Belongs to the NusB family.

In terms of biological role, involved in transcription antitermination. Required for transcription of ribosomal RNA (rRNA) genes. Binds specifically to the boxA antiterminator sequence of the ribosomal RNA (rrn) operons. The sequence is that of Transcription antitermination protein NusB from Streptococcus pyogenes serotype M4 (strain MGAS10750).